The following is a 423-amino-acid chain: Acyl-coenzyme A diphosphatase FITM2 (423 aa).

The segment at 1–47 is disordered; sequence MATKRRPLRPNLGGTAGSPSSSGSNMNFRPGGPDITRSEARGTRPTA. Residues 1-75 lie on the Cytoplasmic side of the membrane; the sequence is MATKRRPLRP…KTIFFNTDLK (75 aa). A helical transmembrane segment spans residues 76–96; sequence VALYLGSLFVISVIGDFVPFP. At 97-113 the chain is on the lumenal side; the sequence is KTYFARSDNLFNQYFVK. The chain crosses the membrane as a helical span at residues 114-134; sequence IGWGWTLLFVVPFLVLSAYTI. Over 135–146 the chain is Cytoplasmic; it reads TCGDHKRMLRHH. The chain crosses the membrane as a helical span at residues 147 to 167; the sequence is FPRIVIATFFWFFWTKLFNVV. Residues 168-191 lie on the Lumenal side of the membrane; it reads ENSYGRCTTKGYATKSSCLKAGHL. The chain crosses the membrane as a helical span at residues 192–212; sequence WKGFDISGHAFILIHSSLVLI. Residue His200 is part of the active site. The Cytoplasmic portion of the chain corresponds to 213-270; that stretch reads EEARPIIRWETIKEHIRNERHNRSTAENSGTNPLRTLNEEQMRSLQFLYKRLTPIIRT. The chain crosses the membrane as a helical span at residues 271 to 291; the sequence is LFIGMAALQLLWDIMLVGTML. The Lumenal segment spans residues 292–299; it reads YYHRMIEK. Residue His294 is part of the active site. The chain crosses the membrane as a helical span at residues 300-320; sequence VISGIIAILTWYFTYRFWYPT. Topologically, residues 321–423 are cytoplasmic; that stretch reads PGLLPEAPGN…RDREQQTLES (103 aa). Disordered regions lie at residues 344-381 and 400-423; these read FKRPSHLSTGAATTSSGSNSSRTNLNGKAATTGVPRDQ and AAANLLMSDQQKRERDREQQTLES. Residues 351–367 show a composition bias toward low complexity; that stretch reads STGAATTSSGSNSSRTN. Residues 409–423 show a composition bias toward basic and acidic residues; that stretch reads QQKRERDREQQTLES.

This sequence belongs to the FIT family. FIT2 subfamily.

The protein resides in the endoplasmic reticulum membrane. The enzyme catalyses an acyl-CoA + H2O = an acyl-4'-phosphopantetheine + adenosine 3',5'-bisphosphate + 2 H(+). Its function is as follows. Fatty acyl-coenzyme A (CoA) diphosphatase that hydrolyzes fatty acyl-CoA to yield acyl-4'-phosphopantetheine and adenosine 3',5'-bisphosphate. Preferentially hydrolyzes unsaturated long-chain acyl-CoA substrates in the endoplasmic reticulum (ER) lumen. This catalytic activity is required for maintaining ER structure and for lipid droplets (LDs) biogenesis, which are lipid storage organelles involved in maintaining lipid and energy homeostasis. May directly bind to diacylglycerol (DAGs) and triacylglycerol, which is also important for LD biogenesis. May support directional budding of nacent LDs from the ER into the cytosol by reducing DAG levels at sites of LD formation. Plays a role in the regulation of cell morphology and cytoskeletal organization. Required for correct morphology of nociceptive multi-dendritic sensory neurons. Required for normal mechanical amplification in hearing. The protein is Acyl-coenzyme A diphosphatase FITM2 of Drosophila melanogaster (Fruit fly).